Reading from the N-terminus, the 238-residue chain is Uridylate kinase (238 aa).

12-15 (KLSG) serves as a coordination point for ATP. G54 provides a ligand contact to UMP. The ATP site is built by G55 and R59. UMP is bound by residues D74 and 135–142 (TGNPFFTT). The ATP site is built by T162, N163, Y168, and D171.

The protein belongs to the UMP kinase family. Homohexamer.

It is found in the cytoplasm. It carries out the reaction UMP + ATP = UDP + ADP. It participates in pyrimidine metabolism; CTP biosynthesis via de novo pathway; UDP from UMP (UMPK route): step 1/1. Inhibited by UTP. Functionally, catalyzes the reversible phosphorylation of UMP to UDP. The protein is Uridylate kinase of Rhodopseudomonas palustris (strain HaA2).